We begin with the raw amino-acid sequence, 159 residues long: Photosystem I reaction center subunit XI (159 aa).

3 helical membrane passes run 53–73 (LEIGMAHGYFLIGPWVKLGPL), 84–104 (LISGIALILIATACLAAYGIV), and 125–145 (FTAGFFVGATGGAFVAFTLLE).

This sequence belongs to the PsaL family.

It localises to the cellular thylakoid membrane. The polypeptide is Photosystem I reaction center subunit XI (Cyanothece sp. (strain PCC 7425 / ATCC 29141)).